A 207-amino-acid polypeptide reads, in one-letter code: Ribosomal RNA large subunit methyltransferase E (207 aa).

Residues Gly-60, Trp-62, Asp-80, Asp-96, and Asp-121 each coordinate S-adenosyl-L-methionine. Lys-161 acts as the Proton acceptor in catalysis.

It belongs to the class I-like SAM-binding methyltransferase superfamily. RNA methyltransferase RlmE family.

The protein resides in the cytoplasm. It catalyses the reaction uridine(2552) in 23S rRNA + S-adenosyl-L-methionine = 2'-O-methyluridine(2552) in 23S rRNA + S-adenosyl-L-homocysteine + H(+). Its function is as follows. Specifically methylates the uridine in position 2552 of 23S rRNA at the 2'-O position of the ribose in the fully assembled 50S ribosomal subunit. The sequence is that of Ribosomal RNA large subunit methyltransferase E from Ectopseudomonas mendocina (strain ymp) (Pseudomonas mendocina).